A 338-amino-acid polypeptide reads, in one-letter code: Ferredoxin--NADP reductase (338 aa).

Residues Asp35, Gln43, Tyr48, Ala88, Phe122, Asp289, and Thr330 each contribute to the FAD site.

The protein belongs to the ferredoxin--NADP reductase type 2 family. In terms of assembly, homodimer. The cofactor is FAD.

It catalyses the reaction 2 reduced [2Fe-2S]-[ferredoxin] + NADP(+) + H(+) = 2 oxidized [2Fe-2S]-[ferredoxin] + NADPH. The polypeptide is Ferredoxin--NADP reductase (Ehrlichia chaffeensis (strain ATCC CRL-10679 / Arkansas)).